A 1009-amino-acid polypeptide reads, in one-letter code: Adhesion G-protein coupled receptor G2 (1009 aa).

The first 37 residues, 1-37, serve as a signal peptide directing secretion; it reads MLFSGGQYSPVGRPEEVLLIYKIFLVIICFHVILVTS. Residues 38-617 lie on the Extracellular side of the membrane; it reads LKENGNSSLL…SRTSLPPSQM (580 aa). N-linked (GlcNAc...) asparagine glycosylation is found at Asn-43, Asn-77, Asn-91, Asn-103, Asn-109, Asn-127, Asn-136, Asn-154, Asn-178, and Asn-186. Disordered stretches follow at residues 279–305 and 325–346; these read MTPS…ASSP and SHTL…PSVP. A compositionally biased stretch (polar residues) spans 280–293; it reads TPSTPSLTQESNLP. 9 N-linked (GlcNAc...) asparagine glycosylation sites follow: Asn-362, Asn-427, Asn-448, Asn-453, Asn-520, Asn-534, Asn-539, Asn-543, and Asn-589. The GAIN-B domain occupies 453–611; that stretch reads NTTTFAAQDP…GILLDLSRTS (159 aa). Cystine bridges form between Cys-562-Cys-593 and Cys-581-Cys-595. The interval 562-611 is GPS; sequence CVFWDLGRNGGKGGWSSDGCSVKDKRMNETICTCSHLTSFGILLDLSRTS. The segment at 600–611 is stachel; that stretch reads SFGILLDLSRTS. The helical transmembrane segment at 618 to 640 threads the bilayer; that stretch reads MALTFITYIGCGLSSIFLSVTLV. Residues 641–655 lie on the Cytoplasmic side of the membrane; that stretch reads TYIAFEKIRRDYPSK. The chain crosses the membrane as a helical span at residues 656–679; sequence ILIQLCAALLLLNLIFLLDSWIAL. At 680–683 the chain is on the extracellular side; it reads YNTR. The helical transmembrane segment at 684–709 threads the bilayer; it reads GFCIAVAVFLHYFLLVSFTWMGLEAF. Cys-686 and Cys-770 are oxidised to a cystine. The Cytoplasmic segment spans residues 710–728; it reads HMYLALVKVFNTYIRKYIL. A helical membrane pass occupies residues 729 to 751; sequence KFCIVGWGIPAVVVSIVLTISPD. Topologically, residues 752–776 are extracellular; it reads NYGIGSYGKFPNGTPDDFCWINSNV. Residues 777–802 traverse the membrane as a helical segment; sequence VFYITVVGYFCVIFLLNVSMFIVVLV. Over 803–823 the chain is Cytoplasmic; that stretch reads QLCRIKKKKQLGAQRKTSIQD. Residues 824 to 845 form a helical membrane-spanning segment; it reads LRSIAGLTFLLGITWGFAFFAW. Residues 846–850 lie on the Extracellular side of the membrane; sequence GPVNV. Asn-849 is a glycosylation site (N-linked (GlcNAc...) asparagine). Residues 851–872 traverse the membrane as a helical segment; sequence TFMYLFAIFNTLQGFFIFIFYC. Asn-860 provides a ligand contact to 3beta-hydroxyandrost-5-en-17-one. The Cytoplasmic segment spans residues 873-1009; sequence AAKENVRKQW…RGSLHFIEQM (137 aa). Position 1002 is a phosphoserine (Ser-1002).

Belongs to the G-protein coupled receptor 2 family. Adhesion G-protein coupled receptor (ADGR) subfamily. Heterodimer of 2 chains generated by proteolytic processing; the large extracellular N-terminal fragment and the membrane-bound C-terminal fragment predominantly remain associated and non-covalently linked. Interacts with CFTR. Post-translationally, proteolytically cleaved into 2 subunits, an extracellular subunit and a seven-transmembrane subunit. Highly glycosylated. In terms of tissue distribution, epididymis-specific expression (at protein level). Associated with apical membranes of efferent ductule and proximal epididymal duct epithelia. Mainly expressed in the nonciliated principal cells of the proximal excurrent ducts.

It localises to the apical cell membrane. With respect to regulation, forms a heterodimer of 2 chains generated by proteolytic processing that remain associated through non-covalent interactions mediated by the GAIN-B domain. In the inactivated receptor, the Stachel sequence (also named stalk) is embedded in the GAIN-B domain, where it adopts a beta-strand conformation. On activation, the Stachel moves into the 7 transmembrane region and adopts a twisted hook-shaped configuration that forms contacts within the receptor, leading to coupling of a G-alpha protein, which activates signaling. The cleaved GAIN-B and N-terminal domains can then dissociate from the rest of the receptor. Deoxycorticosterone (DOC) acts as an antagonist of ADGRG2. Its function is as follows. Adhesion G-protein coupled receptor (aGPCR) for steroid hormones, such as dehydroepiandrosterone (DHEA; also named 3beta-hydroxyandrost-5-en-17-one) and androstenedione. Involved in a signal transduction pathway controlling epididymal function and male fertility. Ligand binding causes a conformation change that triggers signaling via guanine nucleotide-binding proteins (G proteins) and modulates the activity of downstream effectors, such as adenylate cyclase. ADGRG2 is coupled to G(s) G proteins and mediates activation of adenylate cyclase activity. Also able to couple with G(q) G proteins in vitro. May regulate fluid exchange within epididymis. This Mus musculus (Mouse) protein is Adhesion G-protein coupled receptor G2.